The following is a 204-amino-acid chain: Protein DESIGUAL 4 (204 aa).

A run of 4 helical transmembrane segments spans residues isoleucine 13–phenylalanine 33, phenylalanine 60–isoleucine 80, cysteine 107–tryptophan 127, and valine 143–isoleucine 163. Residues lysine 177–proline 204 form a disordered region. N-linked (GlcNAc...) asparagine glycosylation occurs at asparagine 179.

The protein belongs to the DESIGUAL family. As to expression, only expressed in inflorescences.

Its subcellular location is the endoplasmic reticulum membrane. The polypeptide is Protein DESIGUAL 4 (Arabidopsis thaliana (Mouse-ear cress)).